Here is a 161-residue protein sequence, read N- to C-terminus: Regulator of ribonuclease activity A (161 aa).

The protein belongs to the RraA family. In terms of assembly, homotrimer. Binds to both RNA-binding sites in the C-terminal region of Rne and to RhlB.

The protein localises to the cytoplasm. Functionally, globally modulates RNA abundance by binding to RNase E (Rne) and regulating its endonucleolytic activity. Can modulate Rne action in a substrate-dependent manner by altering the composition of the degradosome. Modulates RNA-binding and helicase activities of the degradosome. In Pectobacterium atrosepticum (strain SCRI 1043 / ATCC BAA-672) (Erwinia carotovora subsp. atroseptica), this protein is Regulator of ribonuclease activity A.